The following is a 575-amino-acid chain: 2-isopropylmalate synthase (575 aa).

The 275-residue stretch at 40–314 folds into the Pyruvate carboxyltransferase domain; sequence PRWCAVDLRD…DPQIDFSDID (275 aa). Mg(2+) is bound by residues aspartate 49, histidine 253, histidine 255, and asparagine 289. The interval 456-575 is regulatory domain; it reads SGSGTPEWGR…IVSAVNRALR (120 aa).

It belongs to the alpha-IPM synthase/homocitrate synthase family. LeuA type 2 subfamily. As to quaternary structure, homodimer. The cofactor is Mg(2+).

It is found in the cytoplasm. The enzyme catalyses 3-methyl-2-oxobutanoate + acetyl-CoA + H2O = (2S)-2-isopropylmalate + CoA + H(+). The protein operates within amino-acid biosynthesis; L-leucine biosynthesis; L-leucine from 3-methyl-2-oxobutanoate: step 1/4. Its function is as follows. Catalyzes the condensation of the acetyl group of acetyl-CoA with 3-methyl-2-oxobutanoate (2-ketoisovalerate) to form 3-carboxy-3-hydroxy-4-methylpentanoate (2-isopropylmalate). This Kineococcus radiotolerans (strain ATCC BAA-149 / DSM 14245 / SRS30216) protein is 2-isopropylmalate synthase.